Reading from the N-terminus, the 237-residue chain is Putative anti-FlhC(2)FlhD(4) factor YdiV (237 aa).

Residues 1 to 237 (MKIFLENLYH…INQITTLVQR (237 aa)) form the EAL domain.

Belongs to the YdiV family.

Functionally, upon overexpression acts as a novel anti-FlhC(2)FlhD(4) factor, decreasing its DNA-binding activity, able to negatively regulate expression of flagellar class II operons including FliC. This chain is Putative anti-FlhC(2)FlhD(4) factor YdiV (ydiV), found in Escherichia coli (strain K12).